The chain runs to 502 residues: Putative diacyglycerol O-acyltransferase Rv1760 (502 aa).

His174 acts as the Proton acceptor in catalysis.

Belongs to the long-chain O-acyltransferase family.

It catalyses the reaction an acyl-CoA + a 1,2-diacyl-sn-glycerol = a triacyl-sn-glycerol + CoA. The catalysed reaction is di-(9Z)-octadecenoylglycerol + (9Z)-octadecenoyl-CoA = 1,2,3-tri-(9Z-octadecenoyl)-glycerol + CoA. It participates in glycerolipid metabolism; triacylglycerol biosynthesis. Functionally, catalyzes the terminal and only committed step in triacylglycerol synthesis by using diacylglycerol and fatty acyl CoA as substrates. Required for storage lipid synthesis. In terms of biological role, upon expression in E.coli functions weakly as a triacylglycerol synthase, making triacylglycerol (TG) from diolein and long-chain fatty acyl-CoA. Has very weak wax synthase activity, incorporating palmityl alcohol into wax esters in the presence of palmitoyl-CoA. In Mycobacterium tuberculosis (strain ATCC 25618 / H37Rv), this protein is Putative diacyglycerol O-acyltransferase Rv1760.